The sequence spans 202 residues: Probable adenylyl-sulfate kinase (202 aa).

ATP is bound at residue 36 to 43; sequence GLSGSGKS. Catalysis depends on serine 110, which acts as the Phosphoserine intermediate.

Belongs to the APS kinase family.

It carries out the reaction adenosine 5'-phosphosulfate + ATP = 3'-phosphoadenylyl sulfate + ADP + H(+). It participates in sulfur metabolism; hydrogen sulfide biosynthesis; sulfite from sulfate: step 2/3. In terms of biological role, catalyzes the synthesis of activated sulfate. The chain is Probable adenylyl-sulfate kinase from Halalkalibacterium halodurans (strain ATCC BAA-125 / DSM 18197 / FERM 7344 / JCM 9153 / C-125) (Bacillus halodurans).